A 228-amino-acid chain; its full sequence is uncharacterized protein (228 aa).

Positions 1–16 (MILLLLALISATTAFQ) are cleaved as a signal peptide. Residues 206–225 (LFQTLFFVTLSFLVGSAFAL) traverse the membrane as a helical segment.

The protein to A.fulgidus AF_1225.

It is found in the membrane. This is an uncharacterized protein from Archaeoglobus fulgidus (strain ATCC 49558 / DSM 4304 / JCM 9628 / NBRC 100126 / VC-16).